The primary structure comprises 496 residues: Galactan beta-1,4-galactosyltransferase GALS1 (496 aa).

Residues 22–42 (IIATLLALSLVMIVWNLPPYY) traverse the membrane as a helical segment. Positions 232-464 (DYLYCGSSLY…AKKKVTLYNK (233 aa)) constitute a GT92 domain.

It belongs to the glycosyltransferase 92 family. As to expression, expressed in root vasculature, mature leaves, trichomes, flowers, siliques and seeds.

The protein localises to the golgi apparatus membrane. Involved in the biosynthesis of beta-1,4-galactan. Can transfer galactose residues from UDP-galactose to beta-1,4-galactopentaose in vitro. Forms specifically beta-1,4-galactosyl linkages and can add successive beta-1,4-galactosyl residues to the acceptor. Beta-1,4-galactans are abundant polysaccharides in plant cell walls and are found as side-chain of rhamnogalacturonan I, which is a major component of pectin. This chain is Galactan beta-1,4-galactosyltransferase GALS1, found in Arabidopsis thaliana (Mouse-ear cress).